Reading from the N-terminus, the 677-residue chain is Threonine--tRNA ligase (677 aa).

Positions 1–59 (MAQATISITVNGEAKEVEATTTGVELFAEDKNIIAVKINGENRDLYTPLNDGDTVDPIA) constitute a TGS domain. Residues 255–561 (DHRKLGAEMD…LLEHYAGAFP (307 aa)) are catalytic. Residues Cys-360, His-411, and His-538 each contribute to the Zn(2+) site.

The protein belongs to the class-II aminoacyl-tRNA synthetase family. As to quaternary structure, homodimer. Zn(2+) serves as cofactor.

The protein localises to the cytoplasm. The catalysed reaction is tRNA(Thr) + L-threonine + ATP = L-threonyl-tRNA(Thr) + AMP + diphosphate + H(+). In terms of biological role, catalyzes the attachment of threonine to tRNA(Thr) in a two-step reaction: L-threonine is first activated by ATP to form Thr-AMP and then transferred to the acceptor end of tRNA(Thr). Also edits incorrectly charged L-seryl-tRNA(Thr). In Bifidobacterium longum (strain DJO10A), this protein is Threonine--tRNA ligase.